The sequence spans 357 residues: Adenylate isopentenyltransferase 1, chloroplastic (357 aa).

A chloroplast-targeting transit peptide spans 1–71 (MTELNFHLLP…NRKDKVVVIL (71 aa)). The span at 20–39 (TTTSPSFSSHSSSSSSLLSF) shows a compositional bias: low complexity. Residues 20-58 (TTTSPSFSSHSSSSSSLLSFTKRRRKHQPLVSSIRMEQS) form a disordered region. An ATP-binding site is contributed by 72-79 (GATGAGKS).

It belongs to the IPP transferase family. As to expression, expressed in the vascular stele of the roots, in the xylem precursor cell files in the root tip, in leaf axils, ovules, and immature seeds.

It is found in the plastid. Its subcellular location is the chloroplast. The enzyme catalyses dimethylallyl diphosphate + AMP = N(6)-(dimethylallyl)adenosine 5'-phosphate + diphosphate. The catalysed reaction is dimethylallyl diphosphate + ADP = N(6)-(dimethylallyl)adenosine 5'-diphosphate + diphosphate. It carries out the reaction dimethylallyl diphosphate + ATP = N(6)-(dimethylallyl)adenosine 5'-triphosphate + diphosphate. Its function is as follows. Involved in cytokinin biosynthesis. Catalyzes the transfer of an isopentenyl group from dimethylallyl diphosphate (DMAPP) to ATP, ADP and AMP. Adenine, adenosine, isopentenylpyrophosphate and 1-hydroxy-2-methyl-2-(E)-butenyl 4-diphosphate (HMBDP) are not used as substrates. The chain is Adenylate isopentenyltransferase 1, chloroplastic (IPT1) from Arabidopsis thaliana (Mouse-ear cress).